A 285-amino-acid chain; its full sequence is Elongation factor Ts (285 aa).

Positions 82 to 85 (TDFV) are involved in Mg(2+) ion dislocation from EF-Tu.

Belongs to the EF-Ts family.

Its subcellular location is the cytoplasm. Functionally, associates with the EF-Tu.GDP complex and induces the exchange of GDP to GTP. It remains bound to the aminoacyl-tRNA.EF-Tu.GTP complex up to the GTP hydrolysis stage on the ribosome. This Yersinia pseudotuberculosis serotype O:1b (strain IP 31758) protein is Elongation factor Ts.